We begin with the raw amino-acid sequence, 122 residues long: MIQQESRLKVADNTGAREILCIRVLGGSTRRFAGIGDVIVATVKEATPGGNVKSGEIVKAVIVRTKKETRRADGSYISFDENAAVIIKNDNEPRGTRIFGPVARELREKKFMKIVSLAPEVI.

This sequence belongs to the universal ribosomal protein uL14 family. In terms of assembly, part of the 50S ribosomal subunit. Forms a cluster with proteins L3 and L19. In the 70S ribosome, L14 and L19 interact and together make contacts with the 16S rRNA in bridges B5 and B8.

Binds to 23S rRNA. Forms part of two intersubunit bridges in the 70S ribosome. This chain is Large ribosomal subunit protein uL14, found in Corynebacterium glutamicum (strain R).